The following is a 462-amino-acid chain: Toxin CfTX-2 (462 aa).

The signal sequence occupies residues 1–17; it reads MILVSLLPLLFMTGIAS.

Belongs to the jellyfish toxin family. Type I subfamily. In terms of assembly, oligomer. Contains disulfide bonds. Nematocytes.

The protein localises to the secreted. It is found in the nematocyst. The protein resides in the target cell membrane. Functionally, may cause profound effects on the cardiovascular system of anesthetized rats (at 25 ug/kg), since the fraction containing this toxin and CfTX-1 produces an initial increase in mean arterial pressure, followed by cardiovascular collapse in all animals within 1 minute of injection. To note, the same fraction does not induce significant change in heart rate. Has weak hemolytic activity. Is lethal to crayfish. Causes cutaneous inflammation in humans. May act as a pore-forming toxin, disrupting normal transmembrane ion concentration gradients in susceptible cells. The chain is Toxin CfTX-2 from Chironex fleckeri (Australian box jellyfish).